Here is a 205-residue protein sequence, read N- to C-terminus: MTEFKLNYHKTHFMTSAANIHQLPKDEGMEIAFAGRSNAGKSTALNALTNQKNLARTSKTPGRTQLINLFEVEPQYKLVDLPGYGYAAVPEQMKLQWQKSLGEYLQHRECLKGVVILMDIRHPLKDLDQQMIEWAVSSDLPVLLLLTKADKLSQSARSKQVKTVREAILPFQGDVQVEAFSAQNKIGIDKLAAKLDSWFSSLLTE.

Residues 27-201 enclose the EngB-type G domain; sequence EGMEIAFAGR…AAKLDSWFSS (175 aa). Residues 35 to 42, 62 to 66, 80 to 83, 147 to 150, and 180 to 182 each bind GTP; these read GRSNAGKS, GRTQL, DLPG, TKAD, and FSA. Mg(2+) contacts are provided by serine 42 and threonine 64.

The protein belongs to the TRAFAC class TrmE-Era-EngA-EngB-Septin-like GTPase superfamily. EngB GTPase family. It depends on Mg(2+) as a cofactor.

Its function is as follows. Necessary for normal cell division and for the maintenance of normal septation. In Mannheimia succiniciproducens (strain KCTC 0769BP / MBEL55E), this protein is Probable GTP-binding protein EngB.